The chain runs to 236 residues: Phosphoribosylaminoimidazole-succinocarboxamide synthase (236 aa).

Belongs to the SAICAR synthetase family.

The enzyme catalyses 5-amino-1-(5-phospho-D-ribosyl)imidazole-4-carboxylate + L-aspartate + ATP = (2S)-2-[5-amino-1-(5-phospho-beta-D-ribosyl)imidazole-4-carboxamido]succinate + ADP + phosphate + 2 H(+). It participates in purine metabolism; IMP biosynthesis via de novo pathway; 5-amino-1-(5-phospho-D-ribosyl)imidazole-4-carboxamide from 5-amino-1-(5-phospho-D-ribosyl)imidazole-4-carboxylate: step 1/2. This Chlorobium phaeobacteroides (strain DSM 266 / SMG 266 / 2430) protein is Phosphoribosylaminoimidazole-succinocarboxamide synthase.